The chain runs to 731 residues: Cucumisin (731 aa).

Residues 1–22 (MSSSLIFKLFFFSLFFSNRLAS) form the signal peptide. Residues 23–110 (RLDSDDDGKN…VFLNEMNELH (88 aa)) constitute a propeptide, activation peptide. In terms of domain architecture, Inhibitor I9 spans 34-110 (YIVYMGRKLE…VFLNEMNELH (77 aa)). The Peptidase S8 domain maps to 114–584 (SWDFLGFPLT…SGHVNPLKAV (471 aa)). Asp-140 functions as the Charge relay system in the catalytic mechanism. Cys-166 and Cys-174 are disulfide-bonded. Residue His-204 is the Charge relay system of the active site. 2 cysteine pairs are disulfide-bonded: Cys-245/Cys-250 and Cys-380/Cys-397. N-linked (GlcNAc...) asparagine glycosylation occurs at Asn-466. Ser-525 serves as the catalytic Charge relay system. A propeptide spanning residues 616 to 731 (GDYSACTSGN…RSPITITSLV (116 aa)) is cleaved from the precursor. Asn-652 carries an N-linked (GlcNAc...) asparagine glycan.

The protein belongs to the peptidase S8 family. Monomer and dimer. In terms of processing, the C-terminal propeptide is autocleaved. In terms of tissue distribution, specifically expressed in fruits. Expressed in sarcocarp (at protein level).

It localises to the secreted. The catalysed reaction is Hydrolysis of proteins with broad specificity.. The chain is Cucumisin from Cucumis melo (Muskmelon).